The primary structure comprises 645 residues: Heat shock protein SSA2 (645 aa).

Serine 2 is modified (N-acetylserine). The disordered stretch occupies residues 581–645 (ANQTATQEEF…NDGPTVEEVD (65 aa)). Positions 611 to 621 (AGATPSGAAGA) are enriched in low complexity.

The protein belongs to the heat shock protein 70 family. As to quaternary structure, binds human histatin-5, an antifungal peptide from saliva.

It localises to the cytoplasm. The protein resides in the secreted. It is found in the cell wall. Its function is as follows. Heat shock protein that may play a role in the transport of polypeptides both across the mitochondrial membranes and into the endoplasmic reticulum. In terms of biological role, acts as a highly immunodominant antigen. Plays a role in the sensitivity to, and the import of candidacidal beta-defensin peptides. HSP70/SSA1 and SSA2 bind histatin-5, a peptide from human saliva, and mediates its fungicidal activity. SSA2 facilitates fungicidal activity of Hst 5 in binding and intracellular translocation, whereas HSP70/SSA1 appears to have a lesser functional role in Hst 5 toxicity. This is Heat shock protein SSA2 from Candida albicans (strain SC5314 / ATCC MYA-2876) (Yeast).